Here is a 93-residue protein sequence, read N- to C-terminus: Large ribosomal subunit protein uL23cz/uL23cy (93 aa).

It belongs to the universal ribosomal protein uL23 family. In terms of assembly, part of the 50S ribosomal subunit.

The protein resides in the plastid. It is found in the chloroplast. Its function is as follows. Binds to 23S rRNA. This chain is Large ribosomal subunit protein uL23cz/uL23cy (rpl23-A), found in Cucumis sativus (Cucumber).